We begin with the raw amino-acid sequence, 270 residues long: Regulatory protein RecX (270 aa).

It belongs to the RecX family.

The protein resides in the cytoplasm. Its function is as follows. Modulates RecA activity. This is Regulatory protein RecX from Bacillus cereus (strain G9842).